Here is a 476-residue protein sequence, read N- to C-terminus: Cysteine--tRNA ligase (476 aa).

Zn(2+) is bound at residue Cys27. The 'HIGH' region signature appears at Pro29–Asn39. Positions 207, 232, and 236 each coordinate Zn(2+). Residues Lys264 to Ser268 carry the 'KMSKS' region motif. Residue Lys267 coordinates ATP.

The protein belongs to the class-I aminoacyl-tRNA synthetase family. As to quaternary structure, monomer. Requires Zn(2+) as cofactor.

It is found in the cytoplasm. It catalyses the reaction tRNA(Cys) + L-cysteine + ATP = L-cysteinyl-tRNA(Cys) + AMP + diphosphate. The polypeptide is Cysteine--tRNA ligase (Moorella thermoacetica (strain ATCC 39073 / JCM 9320)).